Here is a 597-residue protein sequence, read N- to C-terminus: Elongation factor 4 (597 aa).

A tr-type G domain is found at Asn2–Lys184. Residues Asp14 to Thr19 and Asn131 to Asp134 each bind GTP.

It belongs to the TRAFAC class translation factor GTPase superfamily. Classic translation factor GTPase family. LepA subfamily.

The protein localises to the cell inner membrane. It catalyses the reaction GTP + H2O = GDP + phosphate + H(+). Functionally, required for accurate and efficient protein synthesis under certain stress conditions. May act as a fidelity factor of the translation reaction, by catalyzing a one-codon backward translocation of tRNAs on improperly translocated ribosomes. Back-translocation proceeds from a post-translocation (POST) complex to a pre-translocation (PRE) complex, thus giving elongation factor G a second chance to translocate the tRNAs correctly. Binds to ribosomes in a GTP-dependent manner. The sequence is that of Elongation factor 4 from Herminiimonas arsenicoxydans.